The chain runs to 319 residues: Probable arabinan endo-1,5-alpha-L-arabinosidase C (319 aa).

The first 16 residues, 1-16 (MFVYTLIFLFLAAANA), serve as a signal peptide directing secretion. Asp31 functions as the Proton acceptor in the catalytic mechanism. N-linked (GlcNAc...) asparagine glycosylation is present at Asn190. The active-site Proton donor is Glu198. Asn222 is a glycosylation site (N-linked (GlcNAc...) asparagine).

This sequence belongs to the glycosyl hydrolase 43 family.

Its subcellular location is the secreted. The catalysed reaction is Endohydrolysis of (1-&gt;5)-alpha-arabinofuranosidic linkages in (1-&gt;5)-arabinans.. It participates in glycan metabolism; L-arabinan degradation. In terms of biological role, endo-1,5-alpha-L-arabinanase involved in degradation of pectin. Its preferred substrate is linear 1,5-alpha-L-arabinan. In Aspergillus clavatus (strain ATCC 1007 / CBS 513.65 / DSM 816 / NCTC 3887 / NRRL 1 / QM 1276 / 107), this protein is Probable arabinan endo-1,5-alpha-L-arabinosidase C (abnC).